The following is a 390-amino-acid chain: DNA replication and repair protein RecF (390 aa).

30–37 (GDNAQGKS) contacts ATP.

It belongs to the RecF family.

It is found in the cytoplasm. The RecF protein is involved in DNA metabolism; it is required for DNA replication and normal SOS inducibility. RecF binds preferentially to single-stranded, linear DNA. It also seems to bind ATP. The sequence is that of DNA replication and repair protein RecF from Trichodesmium erythraeum (strain IMS101).